The primary structure comprises 1120 residues: Putative GTPase-activating protein AN11010 (1120 aa).

The Rab-GAP TBC domain maps to 291–479 (GLPNRLRGEI…RVLDVFFLEG (189 aa)). Disordered stretches follow at residues 673–702 (DSPG…PSPA), 859–903 (DEVK…PNNP), 960–979 (AAKQ…SGGI), 1017–1068 (RNAL…ETDR), and 1081–1120 (GKDD…EFES). Low complexity predominate over residues 864–878 (ESTPSPEGETPGTPS). A compositionally biased stretch (polar residues) spans 960 to 970 (AAKQQPTSSGP). Positions 1023–1032 (DDDDEDDEDD) are enriched in acidic residues. 2 stretches are compositionally biased toward basic and acidic residues: residues 1057-1068 (DPERRSVRETDR) and 1081-1095 (GKDD…DSHQ).

This is Putative GTPase-activating protein AN11010 from Emericella nidulans (strain FGSC A4 / ATCC 38163 / CBS 112.46 / NRRL 194 / M139) (Aspergillus nidulans).